Here is a 110-residue protein sequence, read N- to C-terminus: Glycine cleavage system H-like protein (110 aa).

In terms of domain architecture, Lipoyl-binding spans 10–97 (VEKVGDLYVF…PEENWLFKLD (88 aa)). D27 carries the post-translational modification ADP-ribosyl aspartic acid. K56 is modified (N6-lipoyllysine).

In terms of assembly, lipoylated GcvH-L directly interacts with SAV0325, which reverses the SirTM-mediated mono-ADP-ribosylation of GcvH-L, and with the oxidoreductase SAV0322. Is lipoylated on K-56 by LplA2 (SAV0327) and then mono-ADP-ribosylated, probably on D-27, by SirTM (SAV0326). The mono-ADP-ribosylation state of GcvH-L might regulate the availability of the lipoyl moiety for redox reactions; ADP-ribosylation would inhibit the interaction of the oxidoreductase with GcvH-L when it is not required, thus ADP-ribosylation of GcvH-L might be acting to keep the response 'off' under non-stress conditions.

In terms of biological role, may act as a carrier protein for the ROS scavenging lipoyl moiety and/or as a substrate for oxidoreductases such as SAV0322 and SAV0323. This Staphylococcus aureus (strain Mu50 / ATCC 700699) protein is Glycine cleavage system H-like protein.